The following is a 427-amino-acid chain: CCA-adding enzyme (427 aa).

Residues serine 50 and lysine 53 each contribute to the ATP site. CTP contacts are provided by serine 50 and lysine 53. The Mg(2+) site is built by aspartate 61, aspartate 63, and aspartate 112. ATP contacts are provided by histidine 135, lysine 155, and tyrosine 164. CTP is bound by residues histidine 135, lysine 155, and tyrosine 164.

Belongs to the tRNA nucleotidyltransferase/poly(A) polymerase family. Archaeal CCA-adding enzyme subfamily. Homodimer. It depends on Mg(2+) as a cofactor.

It catalyses the reaction a tRNA precursor + 2 CTP + ATP = a tRNA with a 3' CCA end + 3 diphosphate. It carries out the reaction a tRNA with a 3' CCA end + 2 CTP + ATP = a tRNA with a 3' CCACCA end + 3 diphosphate. Functionally, catalyzes the addition and repair of the essential 3'-terminal CCA sequence in tRNAs without using a nucleic acid template. Adds these three nucleotides in the order of C, C, and A to the tRNA nucleotide-73, using CTP and ATP as substrates and producing inorganic pyrophosphate. tRNA 3'-terminal CCA addition is required both for tRNA processing and repair. Also involved in tRNA surveillance by mediating tandem CCA addition to generate a CCACCA at the 3' terminus of unstable tRNAs. While stable tRNAs receive only 3'-terminal CCA, unstable tRNAs are marked with CCACCA and rapidly degraded. The chain is CCA-adding enzyme from Picrophilus torridus (strain ATCC 700027 / DSM 9790 / JCM 10055 / NBRC 100828 / KAW 2/3).